A 500-amino-acid polypeptide reads, in one-letter code: NAD(P)H-quinone oxidoreductase chain 4, chloroplastic (500 aa).

The next 14 membrane-spanning stretches (helical) occupy residues 4–24 (FPWL…MLFL), 35–55 (YTIC…CYNF), 87–107 (IGTI…AFPV), 113–130 (LFHF…GSFS), 134–154 (LLLF…LLSM), 167–187 (FILY…GISL), 211–231 (IILY…IPLH), 242–262 (HYST…YGLV), 272–292 (AHSM…IYAA), 305–325 (IAYS…SITD), 330–350 (GAIL…FLAG), 386–406 (LALP…GIIT), 416–436 (ILII…LLSM), and 466–486 (ISSL…LALA).

The protein belongs to the complex I subunit 4 family.

The protein resides in the plastid. It is found in the chloroplast thylakoid membrane. The catalysed reaction is a plastoquinone + NADH + (n+1) H(+)(in) = a plastoquinol + NAD(+) + n H(+)(out). It catalyses the reaction a plastoquinone + NADPH + (n+1) H(+)(in) = a plastoquinol + NADP(+) + n H(+)(out). This chain is NAD(P)H-quinone oxidoreductase chain 4, chloroplastic, found in Aethionema grandiflorum (Persian stone-cress).